The primary structure comprises 45 residues: Mu-conotoxin-like Cal 12.1.2c (45 aa).

4 disulfide bridges follow: Cys3/Cys16, Cys11/Cys28, Cys18/Cys33, and Cys27/Cys39. At Pro23 the chain carries 4-hydroxyproline. Trp37 and Trp38 each carry 6'-bromotryptophan. Pro40 carries the post-translational modification 4-hydroxyproline. Residue Trp44 is modified to 6'-bromotryptophan.

Expressed by the venom duct.

Its subcellular location is the secreted. Mu-conotoxins block voltage-gated sodium channels. This toxin reversibly blocks voltage-gated sodium channel in cephalopods, with no alteration in the voltage dependence of sodium conductance or on the kinetics of inactivation. The chain is Mu-conotoxin-like Cal 12.1.2c from Californiconus californicus (California cone).